Reading from the N-terminus, the 846-residue chain is MASERPREPEGEDSIKLSADVKPFVPKFAGLNVAWSESSEACVFPGCAATYYPFVQESPAAEQKMYPEDMAFGAPAFPAQYVSSEIALHPFAYPTYALESTQSVCSVPTLQYDYSQAQCHPGFRPAKPRNEHACPPQEAKCVFKKKSSDERRAWEEQKSSNRRADGAVPCEARPARGSCHLKSDGYHKRPDRKSRILTKSASTSKPEFEFSRLDFPELQSPKNSNLPETQKQPRWGPLGPAASNMSLLGEAGKPVADMVEGKMVKTDHTDGAVTNNAATSSPSCTRELSWTPMGYIVRQTVSSDSAAATETVNSIINLKKTTSSADAKNVSVTSEALSSDPSFSREKRVHPGPKAKASQGSELEQNESSKKNKKKKEKSKSSYEVLPVQEPPRIEDAEEFPNLSVASERRHRGESPKLQSKQQAQNDFKTGGKKSQVPVQLDLGGMLAALEKQQHAPHAKPSSRPVVFSVGAVPVLSKDASSGERGRRSSQVKTPHNPLDSSAPLMKKGKQREIPKAKKPTSLKKIILKERQERMQQRLQESAVSPTVASDDSQDVESGVTNQIPSPDNPTGPEKTEEPMSSTPVVEGESEEPAGTEFQRDPEACQPAPDSATFPKIHSRRFRDYCSQMLSKEVDACVTGLLKELVRFQDRMYQKDPVKAKTKRRLVLGLREVLKHLKLRKLKCIIISPNCEKTQSKGGLDDTLHTIIDCACEQNIPFVFALNRKALGRSLNKAVPVSIVGIFSYDGAQDQFHKMVELTMAARQAYKTMLETMRQEQAGEPGPQTPPSPPMQDPIQSTDEGTLASTGEEPHYIEIWRKHLEAYSQHALELEDSLEASTSQMMNLNL.

Composition is skewed to basic and acidic residues over residues 151 to 165 and 206 to 215; these read RRAW…RRAD and PEFEFSRLDF. Disordered regions lie at residues 151–246, 266–288, 321–440, 448–467, and 475–613; these read RRAW…SNMS, TDHT…TREL, TTSS…VPVQ, AALE…RPVV, and VLSK…DSAT. The residue at position 220 (S220) is a Phosphoserine. 3 stretches are compositionally biased toward polar residues: residues 220-232, 272-288, and 321-342; these read SPKN…TQKQ, AVTN…TREL, and TTSS…SDPS. The short motif at 370 to 380 is the Nuclear localization signal element; it reads KKNKKKKEKSK. Residues 417–428 are compositionally biased toward polar residues; it reads KLQSKQQAQNDF. The span at 527 to 536 shows a compositional bias: basic and acidic residues; the sequence is ILKERQERMQ. Over residues 542 to 551 the composition is skewed to polar residues; sequence SAVSPTVASD. Positions 666–687 are RNA-binding; it reads LVLGLREVLKHLKLRKLKCIII. The interval 774–804 is disordered; sequence RQEQAGEPGPQTPPSPPMQDPIQSTDEGTLA. Residues 783 to 792 show a composition bias toward pro residues; sequence PQTPPSPPMQ.

Ubiquitous.

It localises to the cytoplasm. The protein resides in the nucleus. Functionally, mRNA-binding protein that binds to the SECIS (selenocysteine insertion sequence) element present in the 3'-UTR of mRNAs encoding selenoproteins and facilitates the incorporation of the rare amino acid selenocysteine. Insertion of selenocysteine at UGA codons is mediated by SECISBP2 and EEFSEC: SECISBP2 (1) specifically binds the SECIS sequence once the 80S ribosome encounters an in-frame UGA codon and (2) contacts the RPS27A/eS31 of the 40S ribosome before ribosome stalling. (3) GTP-bound EEFSEC then delivers selenocysteinyl-tRNA(Sec) to the 80S ribosome and adopts a preaccommodated state conformation. (4) After GTP hydrolysis, EEFSEC dissociates from the assembly, selenocysteinyl-tRNA(Sec) accommodates, and peptide bond synthesis and selenoprotein elongation occur. The protein is Selenocysteine insertion sequence-binding protein 2 (Secisbp2) of Rattus norvegicus (Rat).